The sequence spans 251 residues: Ribosomal RNA small subunit methyltransferase J (251 aa).

S-adenosyl-L-methionine is bound by residues 100 to 101 (RD), 116 to 117 (ER), and aspartate 170.

This sequence belongs to the methyltransferase superfamily. RsmJ family.

It is found in the cytoplasm. It carries out the reaction guanosine(1516) in 16S rRNA + S-adenosyl-L-methionine = N(2)-methylguanosine(1516) in 16S rRNA + S-adenosyl-L-homocysteine + H(+). Specifically methylates the guanosine in position 1516 of 16S rRNA. This is Ribosomal RNA small subunit methyltransferase J from Actinobacillus pleuropneumoniae serotype 5b (strain L20).